A 251-amino-acid polypeptide reads, in one-letter code: tRNA pseudouridine synthase A (251 aa).

D52 serves as the catalytic Nucleophile. Y113 provides a ligand contact to substrate.

This sequence belongs to the tRNA pseudouridine synthase TruA family. In terms of assembly, homodimer.

It catalyses the reaction uridine(38/39/40) in tRNA = pseudouridine(38/39/40) in tRNA. In terms of biological role, formation of pseudouridine at positions 38, 39 and 40 in the anticodon stem and loop of transfer RNAs. In Brucella anthropi (strain ATCC 49188 / DSM 6882 / CCUG 24695 / JCM 21032 / LMG 3331 / NBRC 15819 / NCTC 12168 / Alc 37) (Ochrobactrum anthropi), this protein is tRNA pseudouridine synthase A.